The sequence spans 450 residues: Phosphoglucosamine mutase (450 aa).

Residue S101 is the Phosphoserine intermediate of the active site. Mg(2+)-binding residues include S101, D242, D244, and D246. Phosphoserine is present on S101.

It belongs to the phosphohexose mutase family. It depends on Mg(2+) as a cofactor. Activated by phosphorylation.

The enzyme catalyses alpha-D-glucosamine 1-phosphate = D-glucosamine 6-phosphate. Catalyzes the conversion of glucosamine-6-phosphate to glucosamine-1-phosphate. This is Phosphoglucosamine mutase from Rhodopseudomonas palustris (strain BisB5).